The sequence spans 739 residues: Nucleoprotein (739 aa).

The interval 1–25 (MDSRPQKIWMAPSLTESDMDYHKIL) is oligomerization, N-terminal arm. The interval 26–405 (TAGLSVQQGI…TLRKERLAKL (380 aa)) is NP core. Residues 415–647 (PKTSGHYDDD…DSDNTQSEHS (233 aa)) are disordered. Low complexity-rich tracts occupy residues 449-458 (SQDTTIPDVV) and 504-514 (KGGQQKNSQKG). Positions 562-567 (LTPINE) match the Host PPP2R5C-binding motif motif. Residues 567-579 (EEADPLDDADDET) are compositionally biased toward acidic residues. Residues 606–611 (PPAPVY) carry the VP30-binding motif motif. A compositionally biased stretch (basic and acidic residues) spans 611–638 (YRDHSEKKELPQDEQQDQDHTQEARNQD).

It belongs to the filoviruses nucleoprotein family. As to quaternary structure, homooligomer. Homomultimerizes to form the nucleocapsid. Binds to viral genomic RNA. Interacts with VP35 and VP30 to form the nucleocapsid. Interacts with host PPP2R5C; this interaction leads to VP30 dephosphorylation and viral transcription. Interacts with VP24; this interaction facilitates nucleocapsid assembly and genome packaging. Interacts with matrix protein VP40; this interaction allows recruitment of the nucleocapsid into progeny virions. Interacts with host STAU1. Interacts with host NXF1 (via RNA-binding domain); this interaction recruits NXF1 to the inclusion bodies were viral replication takes place, probably to export viral mRNA-NXF1 complexes from these sites. Interacts with host CCDC92; this interaction sequesters NP in the host cytoplasm. Interacts with host TRIM14. Phosphorylated by host. Post-translationally, O-glycosylated by host. In terms of processing, acetylated by host EP300 in vitro.

The protein resides in the virion. It is found in the host cytoplasm. Its function is as follows. Oligomerizes into helical capsid to encapsidate the viral genome, protecting it from nucleases and the cellular innate immune response. VP35 binds to and stabilizes monomeric NP, keeping it soluble. Upon virus replication, NP is recruited to bind cooperatively viral genomic RNA and VP35 is released. The encapsidated genomic RNA is termed the nucleocapsid and serves as template for transcription and replication. The nucleocapsid is helical with a pitch of 10.81 NP per turn and a diameter of about 22nm. Each NP binds to six nucleotides of viral genomic RNA, three being exposed to the solvant and three hidden into the nucleocapsid. Also recruits host PPP2R5C phosphatase to dephosphorylate VP30 and thereby promote viral transcription. Upon virion assembly and budding, NP binds to VP24 and possibly host STAU1. The protein is Nucleoprotein (NP) of Epomops franqueti (Franquet's epauletted fruit bat).